We begin with the raw amino-acid sequence, 186 residues long: Small ribosomal subunit protein uS5 (186 aa).

The 64-residue stretch at 18 to 81 (FVDKLVHINR…EAAKRAMIRV (64 aa)) folds into the S5 DRBM domain.

The protein belongs to the universal ribosomal protein uS5 family. As to quaternary structure, part of the 30S ribosomal subunit. Contacts proteins S4 and S8.

Functionally, with S4 and S12 plays an important role in translational accuracy. Located at the back of the 30S subunit body where it stabilizes the conformation of the head with respect to the body. The chain is Small ribosomal subunit protein uS5 from Parvibaculum lavamentivorans (strain DS-1 / DSM 13023 / NCIMB 13966).